Reading from the N-terminus, the 282-residue chain is Bis(5'-nucleosyl)-tetraphosphatase, symmetrical (282 aa).

Belongs to the Ap4A hydrolase family.

It carries out the reaction P(1),P(4)-bis(5'-adenosyl) tetraphosphate + H2O = 2 ADP + 2 H(+). Its function is as follows. Hydrolyzes diadenosine 5',5'''-P1,P4-tetraphosphate to yield ADP. The sequence is that of Bis(5'-nucleosyl)-tetraphosphatase, symmetrical from Klebsiella pneumoniae subsp. pneumoniae (strain ATCC 700721 / MGH 78578).